The following is an 89-amino-acid chain: Small ribosomal subunit protein uS15 (89 aa).

It belongs to the universal ribosomal protein uS15 family. In terms of assembly, part of the 30S ribosomal subunit. Forms a bridge to the 50S subunit in the 70S ribosome, contacting the 23S rRNA.

Functionally, one of the primary rRNA binding proteins, it binds directly to 16S rRNA where it helps nucleate assembly of the platform of the 30S subunit by binding and bridging several RNA helices of the 16S rRNA. Forms an intersubunit bridge (bridge B4) with the 23S rRNA of the 50S subunit in the ribosome. The protein is Small ribosomal subunit protein uS15 of Shewanella sp. (strain ANA-3).